The primary structure comprises 54 residues: Lectin alpha-1 chain (54 aa).

It belongs to the leguminous lectin family. Tetramer of two alpha and two beta chains.

The sequence is that of Lectin alpha-1 chain from Lathyrus hirsutus (Rough pea).